The primary structure comprises 466 residues: Ribulose bisphosphate carboxylase large chain (466 aa).

N6,N6,N6-trimethyllysine is present on Lys5. Residues Asn114 and Thr164 each contribute to the substrate site. The Proton acceptor role is filled by Lys166. Lys168 serves as a coordination point for substrate. Lys192, Asp194, and Glu195 together coordinate Mg(2+). Lys192 is subject to N6-carboxylysine. Catalysis depends on His285, which acts as the Proton acceptor. Arg286, His318, and Ser370 together coordinate substrate.

It belongs to the RuBisCO large chain family. Type I subfamily. Heterohexadecamer of 8 large chains and 8 small chains; disulfide-linked. The disulfide link is formed within the large subunit homodimers. Mg(2+) is required as a cofactor. The disulfide bond which can form in the large chain dimeric partners within the hexadecamer appears to be associated with oxidative stress and protein turnover.

It localises to the plastid. It is found in the chloroplast. The enzyme catalyses 2 (2R)-3-phosphoglycerate + 2 H(+) = D-ribulose 1,5-bisphosphate + CO2 + H2O. It carries out the reaction D-ribulose 1,5-bisphosphate + O2 = 2-phosphoglycolate + (2R)-3-phosphoglycerate + 2 H(+). RuBisCO catalyzes two reactions: the carboxylation of D-ribulose 1,5-bisphosphate, the primary event in carbon dioxide fixation, as well as the oxidative fragmentation of the pentose substrate in the photorespiration process. Both reactions occur simultaneously and in competition at the same active site. This chain is Ribulose bisphosphate carboxylase large chain, found in Vitis aestivalis (Grape).